The following is a 313-amino-acid chain: Ribosomal RNA small subunit methyltransferase H (313 aa).

S-adenosyl-L-methionine-binding positions include 35–37, Asp55, Phe80, Asp102, and Gln109; that span reads GGH.

The protein belongs to the methyltransferase superfamily. RsmH family.

It localises to the cytoplasm. The catalysed reaction is cytidine(1402) in 16S rRNA + S-adenosyl-L-methionine = N(4)-methylcytidine(1402) in 16S rRNA + S-adenosyl-L-homocysteine + H(+). In terms of biological role, specifically methylates the N4 position of cytidine in position 1402 (C1402) of 16S rRNA. The protein is Ribosomal RNA small subunit methyltransferase H of Shewanella violacea (strain JCM 10179 / CIP 106290 / LMG 19151 / DSS12).